The primary structure comprises 389 residues: Flap endonuclease 1 (389 aa).

The tract at residues Met1 to Arg105 is N-domain. Asp34 contributes to the Mg(2+) binding site. Positions 47 and 71 each coordinate DNA. 5 residues coordinate Mg(2+): Asp87, Glu170, Glu172, Asp191, and Asp193. The tract at residues Asp134–His265 is I-domain. A DNA-binding site is contributed by Glu170. DNA-binding residues include Gly243 and Asp245. Residue Asp245 participates in Mg(2+) binding. The tract at residues Pro351–Phe359 is interaction with PCNA. A disordered region spans residues Lys360–Lys389. The span at Met362–Lys376 shows a compositional bias: basic and acidic residues. Positions Thr377–Lys389 are enriched in basic residues.

Belongs to the XPG/RAD2 endonuclease family. FEN1 subfamily. In terms of assembly, interacts with PCNA. Three molecules of FEN1 bind to one PCNA trimer with each molecule binding to one PCNA monomer. PCNA stimulates the nuclease activity without altering cleavage specificity. Mg(2+) is required as a cofactor. Post-translationally, phosphorylated. Phosphorylation upon DNA damage induces relocalization to the nuclear plasma.

It localises to the nucleus. The protein resides in the nucleolus. The protein localises to the nucleoplasm. Its subcellular location is the mitochondrion. Functionally, structure-specific nuclease with 5'-flap endonuclease and 5'-3' exonuclease activities involved in DNA replication and repair. During DNA replication, cleaves the 5'-overhanging flap structure that is generated by displacement synthesis when DNA polymerase encounters the 5'-end of a downstream Okazaki fragment. It enters the flap from the 5'-end and then tracks to cleave the flap base, leaving a nick for ligation. Also involved in the long patch base excision repair (LP-BER) pathway, by cleaving within the apurinic/apyrimidinic (AP) site-terminated flap. Acts as a genome stabilization factor that prevents flaps from equilibrating into structures that lead to duplications and deletions. Also possesses 5'-3' exonuclease activity on nicked or gapped double-stranded DNA, and exhibits RNase H activity. Also involved in replication and repair of rDNA and in repairing mitochondrial DNA. The chain is Flap endonuclease 1 from Yarrowia lipolytica (strain CLIB 122 / E 150) (Yeast).